Consider the following 631-residue polypeptide: Phosphomethylpyrimidine synthase (631 aa).

Substrate-binding positions include asparagine 239, methionine 268, tyrosine 297, histidine 333, serine 353–glycine 355, aspartate 394–arginine 397, and glutamate 433. Residue histidine 437 coordinates Zn(2+). Tyrosine 460 is a binding site for substrate. Histidine 501 serves as a coordination point for Zn(2+). Positions 581, 584, and 589 each coordinate [4Fe-4S] cluster.

This sequence belongs to the ThiC family. Homodimer. [4Fe-4S] cluster serves as cofactor.

The enzyme catalyses 5-amino-1-(5-phospho-beta-D-ribosyl)imidazole + S-adenosyl-L-methionine = 4-amino-2-methyl-5-(phosphooxymethyl)pyrimidine + CO + 5'-deoxyadenosine + formate + L-methionine + 3 H(+). The protein operates within cofactor biosynthesis; thiamine diphosphate biosynthesis. In terms of biological role, catalyzes the synthesis of the hydroxymethylpyrimidine phosphate (HMP-P) moiety of thiamine from aminoimidazole ribotide (AIR) in a radical S-adenosyl-L-methionine (SAM)-dependent reaction. In Escherichia coli O127:H6 (strain E2348/69 / EPEC), this protein is Phosphomethylpyrimidine synthase.